A 198-amino-acid chain; its full sequence is Pyridoxal 5'-phosphate synthase subunit PdxT (198 aa).

49 to 51 (GES) provides a ligand contact to L-glutamine. The active-site Nucleophile is Cys-81. L-glutamine is bound by residues Arg-113 and 141-142 (IR). Residues His-177 and Glu-179 each act as charge relay system in the active site.

The protein belongs to the glutaminase PdxT/SNO family. In terms of assembly, in the presence of PdxS, forms a dodecamer of heterodimers. Only shows activity in the heterodimer.

The catalysed reaction is aldehydo-D-ribose 5-phosphate + D-glyceraldehyde 3-phosphate + L-glutamine = pyridoxal 5'-phosphate + L-glutamate + phosphate + 3 H2O + H(+). It carries out the reaction L-glutamine + H2O = L-glutamate + NH4(+). The protein operates within cofactor biosynthesis; pyridoxal 5'-phosphate biosynthesis. Catalyzes the hydrolysis of glutamine to glutamate and ammonia as part of the biosynthesis of pyridoxal 5'-phosphate. The resulting ammonia molecule is channeled to the active site of PdxS. In Mycobacterium avium (strain 104), this protein is Pyridoxal 5'-phosphate synthase subunit PdxT.